A 2319-amino-acid chain; its full sequence is Neurogenic locus notch homolog protein 3 (2319 aa).

Over residues 1–14 (MGPGARGRRRRRRL) the composition is skewed to basic residues. Residues 1-20 (MGPGARGRRRRRRLMALPPP) form a disordered region. A signal peptide spans 1-40 (MGPGARGRRRRRRLMALPPPPPPMRALPLLLLLLAGLGAA). EGF-like domains lie at 41–79 (APPC…ERCQ), 80–120 (LEDP…PDCS), and 121–158 (LPDP…RNCR). Over 41–1645 (APPCLDGSPC…LEPPEQSVPL (1605 aa)) the chain is Extracellular. 99 disulfide bridges follow: Cys44-Cys56, Cys50-Cys67, Cys69-Cys78, Cys84-Cys95, Cys89-Cys108, Cys110-Cys119, Cys125-Cys136, Cys130-Cys146, Cys148-Cys157, Cys164-Cys176, Cys170-Cys185, Cys187-Cys196, Cys203-Cys214, Cys208-Cys224, Cys226-Cys235, Cys242-Cys253, Cys247-Cys262, Cys264-Cys273, Cys280-Cys293, Cys287-Cys302, Cys304-Cys313, Cys320-Cys331, Cys325-Cys340, Cys342-Cys351, Cys357-Cys368, Cys362-Cys379, Cys381-Cys390, Cys397-Cys410, Cys404-Cys419, Cys421-Cys430, Cys437-Cys448, Cys442-Cys457, Cys459-Cys468, Cys475-Cys486, Cys480-Cys495, Cys497-Cys506, Cys513-Cys524, Cys518-Cys533, Cys535-Cys544, Cys551-Cys561, Cys556-Cys570, Cys572-Cys581, Cys588-Cys599, Cys593-Cys608, Cys610-Cys619, Cys626-Cys636, Cys631-Cys645, Cys647-Cys656, Cys663-Cys674, Cys668-Cys683, Cys685-Cys694, Cys701-Cys711, Cys706-Cys720, Cys722-Cys731, Cys740-Cys751, Cys745-Cys760, Cys762-Cys771, Cys777-Cys788, Cys782-Cys798, Cys800-Cys809, Cys816-Cys828, Cys822-Cys837, Cys839-Cys848, Cys855-Cys866, Cys860-Cys875, Cys877-Cys886, Cys893-Cys903, Cys898-Cys912, Cys914-Cys923, Cys930-Cys941, Cys935-Cys950, Cys952-Cys961, Cys968-Cys979, Cys973-Cys988, Cys990-Cys999, Cys1006-Cys1017, Cys1011-Cys1024, Cys1026-Cys1035, Cys1042-Cys1063, Cys1057-Cys1072, Cys1074-Cys1083, Cys1090-Cys1101, Cys1095-Cys1110, Cys1112-Cys1121, Cys1128-Cys1139, Cys1133-Cys1148, Cys1150-Cys1159, Cys1166-Cys1184, Cys1178-Cys1193, Cys1195-Cys1204, Cys1211-Cys1224, Cys1216-Cys1234, Cys1236-Cys1245, Cys1252-Cys1263, Cys1257-Cys1277, Cys1279-Cys1288, Cys1295-Cys1306, Cys1300-Cys1315, and Cys1317-Cys1326. One can recognise an EGF-like 4; calcium-binding domain in the interval 160–197 (DIDECRAGASCRHGGTCINTPGSFHCLCPLGYTGLLCE). The EGF-like 5 domain maps to 199 to 236 (PIVPCAPSPCRNGGTCRQSSDVTYDCACLPGFEGQNCE). Residues 238-274 (NVDDCPGHRCLNGGTCVDGVNTYNCQCPPEWTGQFCT) form the EGF-like 6; calcium-binding domain. An EGF-like 7 domain is found at 276-314 (DVDECQLQPNACHNGGTCFNLLGGHSCVCVNGWTGESCS). An EGF-like 8; calcium-binding domain is found at 316–352 (NIDDCATAVCFHGATCHDRVASFYCACPMGKTGLLCH). In terms of domain architecture, EGF-like 9 spans 353 to 391 (LDDACVSNPCHEDAICDTNPVSGRAICTCPPGFTGGACD). The EGF-like 10; calcium-binding domain occupies 393–431 (DVDECSIGANPCEHLGRCVNTQGSFLCQCGRGYTGPRCE). The EGF-like 11; calcium-binding domain occupies 433 to 469 (DVNECLSGPCRNQATCLDRIGQFTCICMAGFTGTFCE). The region spanning 471–507 (DIDECQSSPCVNGGVCKDRVNGFSCTCPSGFSGSTCQ) is the EGF-like 12; calcium-binding domain. In terms of domain architecture, EGF-like 13; calcium-binding spans 509–545 (DVDECASTPCRNGAKCVDQPDGYECRCAEGFEGTLCE). An EGF-like 14; calcium-binding domain is found at 547 to 582 (NVDDCSPDPCHHGRCVDGIASFSCACAPGYTGIRCE). The EGF-like 15; calcium-binding domain occupies 584 to 620 (QVDECRSQPCRYGGKCLDLVDKYLCRCPPGTTGVNCE). The 36-residue stretch at 622–657 (NIDDCASNPCTFGVCRDGINRYDCVCQPGFTGPLCN) folds into the EGF-like 16; calcium-binding domain. In terms of domain architecture, EGF-like 17; calcium-binding spans 659–695 (EINECASSPCGEGGSCVDGENGFHCLCPPGSLPPLCL). EGF-like domains follow at residues 697-732 (ANHP…PRCS), 736-772 (APDA…HQCE), and 773-810 (VLSP…PRCQ). Residues 812–849 (DVDECAGASPCGPHGTCTNLPGSFRCICHGGYTGPFCD) form the EGF-like 21; calcium-binding domain. Positions 851–887 (DIDDCDPNPCLNGGSCQDGVGSFSCSCLSGFAGPRCA) constitute an EGF-like 22; calcium-binding domain. Positions 889–924 (DVDECLSSPCGPGTCTDHVASFTCTCPPGYGGFHCE) constitute an EGF-like 23; calcium-binding domain. EGF-like domains lie at 926–962 (DLLD…THCQ), 964–1000 (KVDP…NQCQ), 1002–1036 (PVDW…PLCD), 1038–1084 (PSLP…SHCE), and 1086–1122 (EVDP…DSCE). The region spanning 1124–1160 (DVDECASQPCQNGGSCIDLVAHYLCSCPPGTLGVLCE) is the EGF-like 29; calcium-binding domain. The 44-residue stretch at 1162 to 1205 (NEDDCGPGPSLDSGLRCLHNGTCVDLVGGFRCNCPPGYTGLHCE) folds into the EGF-like 30; calcium-binding domain. Asn1181 carries an N-linked (GlcNAc...) asparagine glycan. 4 EGF-like domains span residues 1207 to 1246 (DINE…PRCQ), 1248 to 1289 (ALFP…LRCE), 1291 to 1327 (VARS…PSCR), and 1337 to 1375 (TNTS…PRCE). Asn1338 carries an N-linked (GlcNAc...) asparagine glycan. 12 cysteine pairs are disulfide-bonded: Cys1341–Cys1352, Cys1346–Cys1363, Cys1365–Cys1374, Cys1389–Cys1412, Cys1394–Cys1407, Cys1403–Cys1419, Cys1430–Cys1453, Cys1435–Cys1448, Cys1444–Cys1460, Cys1469–Cys1495, Cys1477–Cys1490, and Cys1486–Cys1502. LNR repeat units lie at residues 1389-1429 (CPRA…PWRQ), 1430-1467 (CEAL…GRDR), and 1469-1507 (CNPV…SEVP). Asn1440 carries N-linked (GlcNAc...) asparagine glycosylation. A helical membrane pass occupies residues 1646–1666 (LPLLVAGAVFLLVIFVLGVMV). Residues 1667-2319 (ARRKREHSTL…EVTPKRQVMA (653 aa)) lie on the Cytoplasmic side of the membrane. ANK repeat units follow at residues 1840–1869 (TGET…DTNA), 1873–1903 (SGRT…DLDA), 1907–1936 (DGST…DVNA), 1940–1969 (LGKS…NKDM), and 1973–2002 (KEET…NREI). 2 disordered regions span residues 2026–2046 (LDQP…PLLC) and 2059–2129 (QSGT…EGPY). Residues 2029 to 2046 (PSGPRSPSGPHGLGPLLC) show a composition bias toward low complexity. Arg2175 is modified (omega-N-methylarginine). A disordered region spans residues 2197–2319 (LNPATPVSPH…EVTPKRQVMA (123 aa)). Residues 2263–2288 (SLSDWSDSTPSPATATSATAAGALPA) are compositionally biased toward low complexity. Residues 2297–2306 (SLPQSQTQLG) are compositionally biased toward polar residues.

This sequence belongs to the NOTCH family. As to quaternary structure, heterodimer of a C-terminal fragment N(TM) and a N-terminal fragment N(EC) which are probably linked by disulfide bonds. Interacts with MAML1, MAML2 and MAML3 which act as transcriptional coactivators for NOTCH3. Interacts with PSMA1. Interacts with HIF1AN. Post-translationally, synthesized in the endoplasmic reticulum as an inactive form which is proteolytically cleaved by a furin-like convertase in the trans-Golgi network before it reaches the plasma membrane to yield an active, ligand-accessible form. Cleavage results in a C-terminal fragment N(TM) and a N-terminal fragment N(EC). Following ligand binding, it is cleaved by TNF-alpha converting enzyme (TACE) to yield a membrane-associated intermediate fragment called notch extracellular truncation (NEXT). This fragment is then cleaved by presenilin dependent gamma-secretase to release a notch-derived peptide containing the intracellular domain (NICD) from the membrane. Phosphorylated. In terms of processing, hydroxylated by HIF1AN. In terms of tissue distribution, expressed in postnatal central nervous system (CNS) germinal zones and, in early postnatal life, within numerous cells throughout the CNS. It is more highly localized to ventricular germinal zones.

The protein localises to the cell membrane. It localises to the nucleus. Functions as a receptor for membrane-bound ligands Jagged1, Jagged2 and Delta1 to regulate cell-fate determination. Upon ligand activation through the released notch intracellular domain (NICD) it forms a transcriptional activator complex with RBPJ/RBPSUH and activates genes of the enhancer of split locus. Affects the implementation of differentiation, proliferation and apoptotic programs. Acts instructively to control the cell fate determination of CNS multipotent progenitor cells, resulting in astroglial induction and neuron/oligodendrocyte suppression. In Rattus norvegicus (Rat), this protein is Neurogenic locus notch homolog protein 3 (Notch3).